A 394-amino-acid chain; its full sequence is L-lactate 2-monooxygenase (394 aa).

One can recognise an FMN hydroxy acid dehydrogenase domain in the interval V19–R394. Y45 is a binding site for a 2-oxocarboxylate. FMN-binding positions include P98–G100, S129, and Q151. Y153 is a binding site for a 2-oxocarboxylate. T179 contacts FMN. R188 contacts a 2-oxocarboxylate. K267 is an FMN binding site. H291 functions as the Proton acceptor in the catalytic mechanism. R294 contacts a 2-oxocarboxylate. FMN contacts are provided by residues D321–R325 and R345.

The protein belongs to the FMN-dependent alpha-hydroxy acid dehydrogenase family. As to quaternary structure, homotetramer. The cofactor is FMN.

It carries out the reaction (S)-lactate + O2 = acetate + CO2 + H2O. Its function is as follows. Catalyzes the oxidative decarboxylation of (S)-lactate (L-lactate) to acetate and carbon dioxide. Its physiological role remains unknown. The protein is L-lactate 2-monooxygenase of Mycolicibacterium smegmatis (Mycobacterium smegmatis).